The following is a 184-amino-acid chain: ATP synthase subunit b, chloroplastic (184 aa).

Residues 27–49 traverse the membrane as a helical segment; that stretch reads LATNPINLSVVLGVLIFFGKGVL.

The protein belongs to the ATPase B chain family. In terms of assembly, F-type ATPases have 2 components, F(1) - the catalytic core - and F(0) - the membrane proton channel. F(1) has five subunits: alpha(3), beta(3), gamma(1), delta(1), epsilon(1). F(0) has four main subunits: a(1), b(1), b'(1) and c(10-14). The alpha and beta chains form an alternating ring which encloses part of the gamma chain. F(1) is attached to F(0) by a central stalk formed by the gamma and epsilon chains, while a peripheral stalk is formed by the delta, b and b' chains.

It localises to the plastid. It is found in the chloroplast thylakoid membrane. Functionally, f(1)F(0) ATP synthase produces ATP from ADP in the presence of a proton or sodium gradient. F-type ATPases consist of two structural domains, F(1) containing the extramembraneous catalytic core and F(0) containing the membrane proton channel, linked together by a central stalk and a peripheral stalk. During catalysis, ATP synthesis in the catalytic domain of F(1) is coupled via a rotary mechanism of the central stalk subunits to proton translocation. Component of the F(0) channel, it forms part of the peripheral stalk, linking F(1) to F(0). This chain is ATP synthase subunit b, chloroplastic, found in Buxus microphylla (Littleleaf boxwood).